The primary structure comprises 100 residues: Toxin Rv0299 (100 aa).

Its function is as follows. Toxic component of a type II toxin-antitoxin (TA) system. Upon expression in M.smegmatis inhibits colony formation. Its toxic effect is neutralized by coexpression with cognate antitoxin Rv0298/MT0312. The chain is Toxin Rv0299 from Mycobacterium tuberculosis (strain ATCC 25618 / H37Rv).